We begin with the raw amino-acid sequence, 390 residues long: 8-demethyl-8-(2-methoxy-alpha-L-rhamnosyl)-tetracenomycin-C 3'-O-methyltransferase (390 aa).

Residues 202–208 (ELGIGGY), Ser-217, Asp-234, 252–253 (SQ), and Asp-275 each bind S-adenosyl-L-methionine. Asp-275 provides a ligand contact to Mg(2+). His-278 acts as the Proton acceptor in catalysis. Residues Glu-303 and Asp-304 each coordinate Mg(2+).

It belongs to the methyltransferase OleY/MycE family. The cofactor is Mg(2+).

It catalyses the reaction 8-demethyl-8-(2-O-methyl-alpha-L-rhamnosyl)-tetracenomycin C + S-adenosyl-L-methionine = 8-demethyl-8-(2,3-di-O-methyl-alpha-L-rhamnosyl)-tetracenomycin C + S-adenosyl-L-homocysteine + H(+). Its pathway is antibiotic biosynthesis. Functionally, O-methyltransferase involved in the biosynthesis of the permethylated L-rhamnose moiety of elloramycin, an antitumor polyketide. Mediates the methylation of the hydroxy groups at the 3'-position after the sugar moiety has been attached to the aglycon. This Streptomyces olivaceus protein is 8-demethyl-8-(2-methoxy-alpha-L-rhamnosyl)-tetracenomycin-C 3'-O-methyltransferase.